A 325-amino-acid chain; its full sequence is Terpene synthase 11 (325 aa).

The short motif at Asp-97 to Glu-102 is the DDxx(x)D/E motif element. Positions Asn-227–Glu-235 match the NDxxSxxxD/E motif motif.

Belongs to the terpene synthase family.

The catalysed reaction is (2E,6E)-farnesyl diphosphate = (E)-beta-farnesene + diphosphate. The enzyme catalyses (2E,6E)-farnesyl diphosphate = (3E,6E)-alpha-farnesene + diphosphate. It catalyses the reaction geranylgeranyl diphosphate + H2O = (S)-(+)-nephthenol + diphosphate. Functionally, terpene synthase that converts its substrate farnesyl diphosphate (FPP) into the sesquiterpenes (E)-beta-farnesene and (E,E)-alpha-farnesene. TPS11 also converts geranylgeranyl diphosphate (GGPP) into the diterpene (S)-nephthenol. The sequence is that of Terpene synthase 11 from Dictyostelium purpureum (Slime mold).